The sequence spans 251 residues: MEYQVKIEAFEGPLDLLLHLINRLEIDIYDIPVAKITEQYLLYVHTMRELELDVASEYLVMAATLLSIKSRMLLPKQEEELFDEEFLEEEEDPREELIEKLIEYRKYKSAAQNLKEREEERQKAFAKPPSDLSDYAKEIKLSEQKLSVTVYDMLGAFQKVLNRKKINRPSETRISRQEIPIEERMTQIVDCLKSSRKRMHFMELFPYEQKEHLVVTFLAILELMKNQLIIIEQEHNFSDIYITGSEAIHDA.

The protein belongs to the ScpA family. Component of a cohesin-like complex composed of ScpA, ScpB and the Smc homodimer, in which ScpA and ScpB bind to the head domain of Smc. The presence of the three proteins is required for the association of the complex with DNA.

Its subcellular location is the cytoplasm. Its function is as follows. Participates in chromosomal partition during cell division. May act via the formation of a condensin-like complex containing Smc and ScpB that pull DNA away from mid-cell into both cell halves. The chain is Segregation and condensation protein A from Bacillus licheniformis (strain ATCC 14580 / DSM 13 / JCM 2505 / CCUG 7422 / NBRC 12200 / NCIMB 9375 / NCTC 10341 / NRRL NRS-1264 / Gibson 46).